A 363-amino-acid polypeptide reads, in one-letter code: Adenosine kinase (363 aa).

3 residues coordinate Mg(2+): Ala-185, Ile-188, and Ala-191. The active site involves Asp-318.

This sequence belongs to the carbohydrate kinase PfkB family. Requires Mg(2+) as cofactor.

It carries out the reaction adenosine + ATP = AMP + ADP + H(+). It participates in purine metabolism; AMP biosynthesis via salvage pathway; AMP from adenosine: step 1/1. Its function is as follows. ATP-dependent phosphorylation of adenosine and other related nucleoside analogs to monophosphate derivatives. It is a key purine metabolic enzyme in the opportunistic parasitic protozoan toxoplasma gondii as it cannot synthesize purines de novo. The sequence is that of Adenosine kinase (AK) from Toxoplasma gondii.